Reading from the N-terminus, the 432-residue chain is MSKIVKVIGREIIDSRGNPTVEAEVHLEGGFVGMAAAPSGASTGSREALELRDGDKSRFLGKGVTKAVAAVNGPIAQAILGKDAKDQAGIDKIMIDLDGTENKSNFGANAILAVSLANAKAAAASKGLPLYAHIAELNGTPGKYSMPVPMMNIINGGEHADNNVDIQEFMIQPVGAPTLKEAVRMGSEVFHHLAKVLKSKGMNTAVGDEGGYAPNLGSNAEALAVIAEAVKAAGYELGKDITLAMDCAASEFYKDGKYVLAGEGNKAFTSEEFTHFLEELTKQYPIVSIEDGLDESDWEGFAYQTKVLGDKIQLVGDDLFVTNTKILKEGIEKGIANSILIKFNQIGSLTETLAAIKMAKDAGYTAVISHRSGETEDATIADLAVGTAAGQIKTGSMSRSDRVAKYNQLIRIEEALGEQAPFNGRKEIKGQA.

(2R)-2-phosphoglycerate is bound at residue Q167. E209 (proton donor) is an active-site residue. Residues D246, E290, and D317 each coordinate Mg(2+). (2R)-2-phosphoglycerate-binding residues include K342, R371, S372, and K393. Catalysis depends on K342, which acts as the Proton acceptor.

The protein belongs to the enolase family. As to quaternary structure, component of the RNA degradosome, a multiprotein complex involved in RNA processing and mRNA degradation. It depends on Mg(2+) as a cofactor.

It localises to the cytoplasm. It is found in the secreted. Its subcellular location is the cell surface. It catalyses the reaction (2R)-2-phosphoglycerate = phosphoenolpyruvate + H2O. Its pathway is carbohydrate degradation; glycolysis; pyruvate from D-glyceraldehyde 3-phosphate: step 4/5. Functionally, catalyzes the reversible conversion of 2-phosphoglycerate (2-PG) into phosphoenolpyruvate (PEP). It is essential for the degradation of carbohydrates via glycolysis. The polypeptide is Enolase (Klebsiella pneumoniae subsp. pneumoniae (strain ATCC 700721 / MGH 78578)).